Consider the following 223-residue polypeptide: Transcriptional regulatory protein HprR (223 aa).

A Response regulatory domain is found at 2-115 (KILLIEDNQR…ELLARVRAQL (114 aa)). Asp-51 carries the 4-aspartylphosphate modification. A DNA-binding region (ompR/PhoB-type) is located at residues 122-220 (NSTLEISGLR…IRGMGYSFVA (99 aa)).

Post-translationally, phosphorylated by HprS.

The protein localises to the cytoplasm. In terms of biological role, member of a two-component regulatory system HprR/HprS involved in response to hydrogen peroxide. Regulates the expression of at least 5 operons, cyoABCDE, hprRS, hiuH, cusRS and cusCFBA. Bifunctional regulator that acts as an activator and a repressor. The chain is Transcriptional regulatory protein HprR from Escherichia coli (strain K12).